The chain runs to 257 residues: Imidazole glycerol phosphate synthase subunit HisF (257 aa).

Residues D11 and D130 contribute to the active site.

This sequence belongs to the HisA/HisF family. Heterodimer of HisH and HisF.

The protein localises to the cytoplasm. It catalyses the reaction 5-[(5-phospho-1-deoxy-D-ribulos-1-ylimino)methylamino]-1-(5-phospho-beta-D-ribosyl)imidazole-4-carboxamide + L-glutamine = D-erythro-1-(imidazol-4-yl)glycerol 3-phosphate + 5-amino-1-(5-phospho-beta-D-ribosyl)imidazole-4-carboxamide + L-glutamate + H(+). Its pathway is amino-acid biosynthesis; L-histidine biosynthesis; L-histidine from 5-phospho-alpha-D-ribose 1-diphosphate: step 5/9. In terms of biological role, IGPS catalyzes the conversion of PRFAR and glutamine to IGP, AICAR and glutamate. The HisF subunit catalyzes the cyclization activity that produces IGP and AICAR from PRFAR using the ammonia provided by the HisH subunit. The polypeptide is Imidazole glycerol phosphate synthase subunit HisF (Francisella philomiragia subsp. philomiragia (strain ATCC 25017 / CCUG 19701 / FSC 153 / O#319-036)).